The chain runs to 102 residues: Small ribosomal subunit protein uS10 (102 aa).

This sequence belongs to the universal ribosomal protein uS10 family. In terms of assembly, part of the 30S ribosomal subunit.

Functionally, involved in the binding of tRNA to the ribosomes. This Streptococcus suis (strain 98HAH33) protein is Small ribosomal subunit protein uS10.